We begin with the raw amino-acid sequence, 965 residues long: Probable ion channel POLLUX (965 aa).

The span at 1–11 (MAESDGGEASP) shows a compositional bias: low complexity. 2 disordered regions span residues 1-76 (MAES…APRG) and 108-158 (GPHA…KSLA). Polar residues predominate over residues 32 to 42 (LTKSRTISGSA). Composition is skewed to low complexity over residues 52–66 (SNSS…SSTA) and 118–149 (RSQQ…ASVS). 4 consecutive transmembrane segments (helical) span residues 187–207 (LSPY…LAIW), 251–271 (ADWN…VFLV), 317–337 (LALL…LYVV), and 369–389 (IVSV…LGLV). RCK N-terminal domains follow at residues 410 to 551 (VNHI…ETVV) and 670 to 818 (PEKI…DKSI).

The protein belongs to the castor/pollux (TC 1.A.1.23) family. As to expression, expressed in roots, leaves, stems and panicles.

It localises to the nucleus membrane. Functionally, required for mycorrhizal symbiosis. This Oryza sativa subsp. japonica (Rice) protein is Probable ion channel POLLUX.